A 261-amino-acid chain; its full sequence is Sulfur carrier protein FdhD (261 aa).

Catalysis depends on C105, which acts as the Cysteine persulfide intermediate. 245–250 (FIRGDR) is a binding site for Mo-bis(molybdopterin guanine dinucleotide).

The protein belongs to the FdhD family.

The protein resides in the cytoplasm. Functionally, required for formate dehydrogenase (FDH) activity. Acts as a sulfur carrier protein that transfers sulfur from IscS to the molybdenum cofactor prior to its insertion into FDH. The chain is Sulfur carrier protein FdhD from Listeria monocytogenes serovar 1/2a (strain ATCC BAA-679 / EGD-e).